The chain runs to 101 residues: Urease subunit beta (101 aa).

It belongs to the urease beta subunit family. Heterotrimer of UreA (gamma), UreB (beta) and UreC (alpha) subunits. Three heterotrimers associate to form the active enzyme.

Its subcellular location is the cytoplasm. The enzyme catalyses urea + 2 H2O + H(+) = hydrogencarbonate + 2 NH4(+). It participates in nitrogen metabolism; urea degradation; CO(2) and NH(3) from urea (urease route): step 1/1. This Paraburkholderia phymatum (strain DSM 17167 / CIP 108236 / LMG 21445 / STM815) (Burkholderia phymatum) protein is Urease subunit beta.